An 81-amino-acid chain; its full sequence is MNPLVSAASVIAAGLAVGLASIGPGVGQGTAAGQAVEGIARQPEAEGKIRGTLLLSLAFMEALTIYGLVVALALLFANPFV.

Transmembrane regions (helical) follow at residues 7-27 (AASV…PGVG) and 57-77 (LAFM…LLFA).

It belongs to the ATPase C chain family. As to quaternary structure, F-type ATPases have 2 components, F(1) - the catalytic core - and F(0) - the membrane proton channel. F(1) has five subunits: alpha(3), beta(3), gamma(1), delta(1), epsilon(1). F(0) has four main subunits: a(1), b(1), b'(1) and c(10-14). The alpha and beta chains form an alternating ring which encloses part of the gamma chain. F(1) is attached to F(0) by a central stalk formed by the gamma and epsilon chains, while a peripheral stalk is formed by the delta, b and b' chains.

It is found in the plastid. It localises to the chloroplast thylakoid membrane. Its function is as follows. F(1)F(0) ATP synthase produces ATP from ADP in the presence of a proton or sodium gradient. F-type ATPases consist of two structural domains, F(1) containing the extramembraneous catalytic core and F(0) containing the membrane proton channel, linked together by a central stalk and a peripheral stalk. During catalysis, ATP synthesis in the catalytic domain of F(1) is coupled via a rotary mechanism of the central stalk subunits to proton translocation. In terms of biological role, key component of the F(0) channel; it plays a direct role in translocation across the membrane. A homomeric c-ring of between 10-14 subunits forms the central stalk rotor element with the F(1) delta and epsilon subunits. The polypeptide is ATP synthase subunit c, chloroplastic (Arabis hirsuta (Hairy rock-cress)).